A 144-amino-acid chain; its full sequence is Pleckstrin homology-like domain family A member 2 (144 aa).

Residues 18–111 (ILCEGELEKR…AAITMALIDF (94 aa)) form the PH domain. Serine 140 carries the phosphoserine modification.

It belongs to the PHLDA2 family. In terms of tissue distribution, specifically expressed at high levels in extraembryonic tissues in the developing conceptus (at protein level). Expressed in placenta and yolc sac. Expressed at low levels in fetal liver and kidney.

The protein localises to the cytoplasm. It is found in the membrane. In terms of biological role, plays a role in regulating placenta growth. May act via its PH domain that competes with other PH domain-containing proteins, thereby preventing their binding to membrane lipids. The sequence is that of Pleckstrin homology-like domain family A member 2 (Phlda2) from Mus musculus (Mouse).